Reading from the N-terminus, the 235-residue chain is Maximins-S type A (235 aa).

The N-terminal stretch at 1–18 (MNFNYFILVLFFITSGHA) is a signal peptide. Propeptides lie at residues 19–35 (KSETRDVHQEAENHIKR) and 52–65 (SAEEQNLAEDLVKR). At N83 the chain carries Asparagine amide. Residues 87 to 100 (SAEEQDLAEDLVTR) constitute a propeptide that is removed on maturation. Position 118 is an asparagine amide (N118). The propeptide occupies 122 to 135 (SAEEQDLAEDLVKR). An Asparagine amide modification is found at N153. Positions 157 to 170 (SAEEQDLAEDLVTR) are excised as a propeptide. The residue at position 188 (K188) is a Lysine amide. Positions 192–205 (SAEDQDLAEDLVTR) are excised as a propeptide. K223 carries the post-translational modification Lysine amide. Residues 227-235 (SAEQEKDMK) constitute a propeptide that is removed on maturation.

This sequence belongs to the maximin-S family. As to expression, expressed by the skin dorsal glands.

Its subcellular location is the secreted. Its function is as follows. Maximin-S1 has no antimicrobial activity. Has no hemolytic activity. Functionally, maximin-S2 has an activity against mycoplasma but has no activity against common Gram-positive and Gram-negative bacteria nor fungi. Has no hemolytic activity. In terms of biological role, maximin-S3 has an activity against mycoplasma but has no activity against common Gram-positive and Gram-negative bacteria nor fungi. Has no hemolytic activity. Maximin-S4 has an activity against mycoplasma but has no activity against common Gram-positive and Gram-negative bacteria nor fungi. Has no hemolytic activity. Its function is as follows. Maximin-S5 has an activity against mycoplasma but has no activity against common Gram-positive and Gram-negative bacteria nor fungi. Has no hemolytic activity. The chain is Maximins-S type A from Bombina maxima (Giant fire-bellied toad).